We begin with the raw amino-acid sequence, 662 residues long: Acetyl-coenzyme A synthetase (662 aa).

CoA-binding positions include Arg-197–Lys-200 and Thr-317. ATP-binding positions include Gly-393–Pro-395, Asp-417–Thr-422, Asp-510, and Arg-525. Residue Ser-533 coordinates CoA. Arg-536 is an ATP binding site. Residues His-549 and Val-552 each contribute to the Mg(2+) site. Lys-623 is modified (N6-acetyllysine).

It belongs to the ATP-dependent AMP-binding enzyme family. Mg(2+) is required as a cofactor. In terms of processing, acetylated. Deacetylation by the SIR2-homolog deacetylase activates the enzyme.

The catalysed reaction is acetate + ATP + CoA = acetyl-CoA + AMP + diphosphate. Functionally, catalyzes the conversion of acetate into acetyl-CoA (AcCoA), an essential intermediate at the junction of anabolic and catabolic pathways. AcsA undergoes a two-step reaction. In the first half reaction, AcsA combines acetate with ATP to form acetyl-adenylate (AcAMP) intermediate. In the second half reaction, it can then transfer the acetyl group from AcAMP to the sulfhydryl group of CoA, forming the product AcCoA. This chain is Acetyl-coenzyme A synthetase, found in Helicobacter pylori (strain G27).